A 351-amino-acid chain; its full sequence is MTAAISFDNARSPDNALPLPAASTARVGVLLVNLGTPDTADAAGVRVYLKEFLSDRRVIEDQGLLWKIILNGIILNVRPRKKAKDYQSIWNTEKNESPLKTITRAQSEKLSAALADRSHVIVDWAMRYGNPSIKAGVDGLMAKGCDRILVVPLYPQYSAATSATVCDEAFRVLTELRAQPTLRVTPPYYNDDFYIEALAVSIEEHLKTLSYKPELIVASFHGMPKEYVDKGDPYREQCVATTELLRKRLGMDDTKLLLTFQSRFGFSEWLQPYTDKTIEKLAKDGVKRIAVVMPGFAADCLETLEEISGENCEIFKHNGGEEFSAVPCLNDSAPGMEVLRQLVLRELQGWL.

Residues histidine 221 and glutamate 302 each contribute to the Fe cation site.

It belongs to the ferrochelatase family.

The protein resides in the cytoplasm. The enzyme catalyses heme b + 2 H(+) = protoporphyrin IX + Fe(2+). The protein operates within porphyrin-containing compound metabolism; protoheme biosynthesis; protoheme from protoporphyrin-IX: step 1/1. Its function is as follows. Catalyzes the ferrous insertion into protoporphyrin IX. This chain is Ferrochelatase, found in Bradyrhizobium sp. (strain BTAi1 / ATCC BAA-1182).